Consider the following 309-residue polypeptide: Maintenance of mitochondrial morphology protein 1 (309 aa).

The Lumenal segment spans residues 1 to 16 (MGNAYIFSLQPTFTQG). Residues 17–37 (LILGQFSILFLLVLVLKYLFF) traverse the membrane as a helical segment. Over 38-309 (DTVSDHAYRT…EQQAGELPVN (272 aa)) the chain is Cytoplasmic. The region spanning 84 to 293 (ECESADWLNA…LPGLASVSEV (210 aa)) is the SMP-LTD domain.

The protein belongs to the MMM1 family. As to quaternary structure, homodimer. Component of the ER-mitochondria encounter structure (ERMES) or MDM complex, composed of MMM1, MDM10, MDM12 and MDM34. An MMM1 homodimer associates with one molecule of MDM12 on each side in a pairwise head-to-tail manner, and the SMP-LTD domains of MMM1 and MDM12 generate a continuous hydrophobic tunnel for phospholipid trafficking.

The protein resides in the endoplasmic reticulum membrane. Component of the ERMES/MDM complex, which serves as a molecular tether to connect the endoplasmic reticulum (ER) and mitochondria. Components of this complex are involved in the control of mitochondrial shape and protein biogenesis, and function in nonvesicular lipid trafficking between the ER and mitochondria. The MDM12-MMM1 subcomplex functions in the major beta-barrel assembly pathway that is responsible for biogenesis of all outer membrane beta-barrel proteins, and acts in a late step after the SAM complex. The MDM10-MDM12-MMM1 subcomplex further acts in the TOM40-specific pathway after the action of the MDM12-MMM1 complex. Essential for establishing and maintaining the structure of mitochondria and maintenance of mtDNA nucleoids. The chain is Maintenance of mitochondrial morphology protein 1 from Postia placenta (strain ATCC 44394 / Madison 698-R) (Brown rot fungus).